The chain runs to 305 residues: Acetaldehyde dehydrogenase (305 aa).

Catalysis depends on C130, which acts as the Acyl-thioester intermediate. NAD(+)-binding positions include 161 to 169 (SVGPGTRKN) and N272.

The protein belongs to the acetaldehyde dehydrogenase family.

It catalyses the reaction acetaldehyde + NAD(+) + CoA = acetyl-CoA + NADH + H(+). This Leptothrix cholodnii (strain ATCC 51168 / LMG 8142 / SP-6) (Leptothrix discophora (strain SP-6)) protein is Acetaldehyde dehydrogenase.